The primary structure comprises 193 residues: Dirigent protein (193 aa).

Residues 1–29 (MGGEKAFSFIFLLFLCFFLANLSASSAHP) form the signal peptide. Cys-40 and Cys-192 are disulfide-bonded. 2 N-linked (GlcNAc...) asparagine glycosylation sites follow: Asn-59 and Asn-129.

The protein belongs to the plant dirigent protein family. Homodimer. As to expression, expressed in rhizomes, stems, and leaves.

Its subcellular location is the secreted. It is found in the extracellular space. The protein localises to the apoplast. Its pathway is aromatic compound metabolism; phenylpropanoid biosynthesis. Its function is as follows. Dirigent proteins impart stereoselectivity on the phenoxy radical-coupling reaction, yielding optically active lignans from two molecules of coniferyl alcohol in the biosynthesis of lignans, flavonolignans, and alkaloids and thus plays a central role in plant secondary metabolism. Also involved in the biosynthesis of etoposide, a chemotherapeutic compound of the topoisomerase inhibitor family. The polypeptide is Dirigent protein (Sinopodophyllum hexandrum (Himalayan may apple)).